The chain runs to 176 residues: MDLPGPIHEILMLFGGFILLLGGLGVVLLTNPIYSAFSLGLVLVCISLFYFLLNSYFVAVAQLLIYVGAINVLIIFAVMFVNGSEWSKDKNYWTIGDGFTSLVCITFVFSLMTTIPDTSWYGILWTTRSNQIVEQGLINNVQQIGIHLATDFYLPFELISIILLVSLIGAITMARQ.

Transmembrane regions (helical) follow at residues Ile-10–Thr-30, Ile-33–Leu-53, Val-60–Phe-80, Ile-95–Ile-115, and Phe-152–Thr-172.

It belongs to the complex I subunit 6 family. As to quaternary structure, NDH is composed of at least 16 different subunits, 5 of which are encoded in the nucleus.

It is found in the plastid. The protein localises to the chloroplast thylakoid membrane. It catalyses the reaction a plastoquinone + NADH + (n+1) H(+)(in) = a plastoquinol + NAD(+) + n H(+)(out). It carries out the reaction a plastoquinone + NADPH + (n+1) H(+)(in) = a plastoquinol + NADP(+) + n H(+)(out). Its function is as follows. NDH shuttles electrons from NAD(P)H:plastoquinone, via FMN and iron-sulfur (Fe-S) centers, to quinones in the photosynthetic chain and possibly in a chloroplast respiratory chain. The immediate electron acceptor for the enzyme in this species is believed to be plastoquinone. Couples the redox reaction to proton translocation, and thus conserves the redox energy in a proton gradient. This Hordeum vulgare (Barley) protein is NAD(P)H-quinone oxidoreductase subunit 6, chloroplastic (ndhG).